The primary structure comprises 1053 residues: DNA-directed RNA polymerase subunit beta' (1053 aa).

Zn(2+)-binding residues include C60, C62, C75, and C78. Positions 449, 451, and 453 each coordinate Mg(2+). Zn(2+) is bound by residues C818, C892, C899, and C902.

The protein belongs to the RNA polymerase beta' chain family. As to quaternary structure, the RNAP catalytic core consists of 2 alpha, 1 beta, 1 beta' and 1 omega subunit. When a sigma factor is associated with the core the holoenzyme is formed, which can initiate transcription. Requires Mg(2+) as cofactor. The cofactor is Zn(2+).

The enzyme catalyses RNA(n) + a ribonucleoside 5'-triphosphate = RNA(n+1) + diphosphate. Functionally, DNA-dependent RNA polymerase catalyzes the transcription of DNA into RNA using the four ribonucleoside triphosphates as substrates. The protein is DNA-directed RNA polymerase subunit beta' of Listeria grayi (Listeria murrayi).